The primary structure comprises 564 residues: Arrestin domain-containing protein E (564 aa).

Positions 74–146 (SQQPQSSQPS…NTSNGFSPPN (73 aa)) are enriched in low complexity. Disordered regions lie at residues 74–150 (SQQP…LNKN) and 245–286 (ASQP…SFPS). Positions 250–259 (PQQPQQPQPQ) are enriched in pro residues. Residues 260–269 (QPQQQQFQQQ) show a composition bias toward low complexity. The span at 270-285 (SYNNNNSTQSMLSSFP) shows a compositional bias: polar residues. The 66-residue stretch at 348-413 (DKCAACDALL…PMCFESTTGL (66 aa)) folds into the LIM zinc-binding domain.

The sequence is that of Arrestin domain-containing protein E (adcE) from Dictyostelium discoideum (Social amoeba).